A 561-amino-acid polypeptide reads, in one-letter code: Zinc finger protein 394 (561 aa).

Serine 12 carries the post-translational modification Phosphoserine. A Glycyl lysine isopeptide (Lys-Gly) (interchain with G-Cter in SUMO2) cross-link involves residue lysine 40. The segment at 43 to 62 (EDSLGSWEPSYPAASPDPET) is disordered. Residues 64 to 146 (RLHFRQLRYQ…AVVRALQRAL (83 aa)) enclose the SCAN box domain. In terms of domain architecture, KRAB spans 155–230 (VTFEDMAVSL…LQEAFQGKRP (76 aa)). Residues lysine 203 and lysine 228 each participate in a glycyl lysine isopeptide (Lys-Gly) (interchain with G-Cter in SUMO2) cross-link. The segment covering 238–247 (THEDRVEKQS) has biased composition (basic and acidic residues). Residues 238 to 283 (THEDRVEKQSGDPLPLKLENSPEAEGFNSISDVNKNGSIEGEDSKN) form a disordered region. Lysine 254 is covalently cross-linked (Glycyl lysine isopeptide (Lys-Gly) (interchain with G-Cter in SUMO2)). The segment covering 265–274 (NSISDVNKNG) has biased composition (polar residues). A Glycyl lysine isopeptide (Lys-Gly) (interchain with G-Cter in SUMO2) cross-link involves residue lysine 282. C2H2-type zinc fingers lie at residues 358-380 (YKCG…QRIH), 386-408 (YGCQ…QRTH), 414-436 (YTCL…QSTH), 442-463 (FKCE…QRLH), 469-491 (YKCE…HRIH), 497-519 (YGCS…QRIH), and 525-547 (YKCL…QRIH). Lysine 443 participates in a covalent cross-link: Glycyl lysine isopeptide (Lys-Gly) (interchain with G-Cter in SUMO2).

It belongs to the krueppel C2H2-type zinc-finger protein family.

It localises to the nucleus. May be involved in transcriptional regulation. The sequence is that of Zinc finger protein 394 (ZNF394) from Pan paniscus (Pygmy chimpanzee).